Reading from the N-terminus, the 121-residue chain is Prefoldin subunit beta (121 aa).

The protein belongs to the prefoldin subunit beta family. As to quaternary structure, heterohexamer of two alpha and four beta subunits.

The protein localises to the cytoplasm. Molecular chaperone capable of stabilizing a range of proteins. Seems to fulfill an ATP-independent, HSP70-like function in archaeal de novo protein folding. The sequence is that of Prefoldin subunit beta from Caldivirga maquilingensis (strain ATCC 700844 / DSM 13496 / JCM 10307 / IC-167).